We begin with the raw amino-acid sequence, 961 residues long: MWCLHCNSERTQSLLELELDSGVEGEAPSSETGTSLDSPSAYHQGPLVPGSSLSPDHYEHTSVGAYGLYAGPGPQQRTRRPRLQHSTSVLRKQAEEEAIKRSRSLSESYELSSDLQDKQVEMLERKYGGRLVTRHAARTIQTAFRQYQMNKNFERLRSSMSENRMSRRIVLSNMRMQFSFEGPEKVHSSYFEGKQVSVTNDGSQLGALVPSECGDLSDPALKSPAPSSDFADAITELEDAFSRQVKSLAESIDDALNCRSLHSEEVPASDTARARDTEPKPGLHGMDHRKLDEMTASYSDVTLYIDEEELSPPLPLSQAGDRPSSTESDLRLRSGGAAQDYWALAHKEDKADTDTSCRSTPSLERPEPRLRVEHLPLLTIEPPSDSSVELSDRSDRSSLKRQSAYERSLGGQQGSPKHGPHGGPPKGLPREEPELRPRPPRPLESHLAINGSANRQSKSESDYSDGDNDSINSTSNSNDTINCSSESSSRDSLREQTLSKQTYHKETRNSWDSPAFSNDVIRKRHYRIGLNLFNKKPEKGIQYLIERGFVPDTPVGVAHFLLQRKGLSRQMIGEFLGNRQKQFNRDVLDCVVDEMDFSAMELDEALRKFQAHIRVQGEAQKVERLIEAFSQRYCVCNPGVVRQFRNPDTIFILAFAIILLNTDMYSPNVKPERKMKLEDFVKNLRGVDDGEDIPRETLIGIYERIRKRELKTNEDHVSQVQKVEKLIVGKKPIGSLHHGLGCVLSLPHRRLVCYCRLFEVPDPNKPQKLGLHQREIFLFNDLLVVTKIFQKKKNSVTYSFRQSFSLYGMQVLLFENQYYPNGIRLTSAVPGADIKVLINFNAPNPQDRKKFTDDLRESVAEVQEMEKHRIESELEKQKGVVRPSMSQCSSLKKESGNGTLSRACLDDSYASGEGLKRSALSSSLRDLSEAGKRGRRSSAGSLESNVEFQPFQPPQPPVLCS.

Positions 21 to 113 (SGVEGEAPSS…SLSESYELSS (93 aa)) are disordered. The segment covering 29–38 (SSETGTSLDS) has biased composition (polar residues). S88, S104, and S106 each carry phosphoserine. The IQ domain occupies 133-162 (TRHAARTIQTAFRQYQMNKNFERLRSSMSE). A phosphoserine mark is found at S179, S247, and S251. Disordered regions lie at residues 263-291 (SEEVPASDTARARDTEPKPGLHGMDHRKL), 310-332 (LSPPLPLSQAGDRPSSTESDLRL), and 347-515 (KEDK…DSPA). The segment covering 272–291 (ARARDTEPKPGLHGMDHRKL) has biased composition (basic and acidic residues). Composition is skewed to basic and acidic residues over residues 364–374 (ERPEPRLRVEH) and 428–444 (LPREEPELRPRPPRPLE). Low complexity predominate over residues 469–487 (DSINSTSNSNDTINCSSES). Phosphoserine occurs at positions 510 and 513. The SEC7 domain occupies 515-708 (AFSNDVIRKR…IGIYERIRKR (194 aa)). Residues 772-864 (HQREIFLFND…LRESVAEVQE (93 aa)) enclose the PH domain. A coiled-coil region spans residues 846–877 (QDRKKFTDDLRESVAEVQEMEKHRIESELEKQ). S890 carries the phosphoserine modification. The residue at position 909 (Y909) is a Phosphotyrosine. Residues 920–961 (LSSSLRDLSEAGKRGRRSSAGSLESNVEFQPFQPPQPPVLCS) are disordered. Phosphoserine occurs at positions 922 and 923. Polar residues predominate over residues 938-947 (SAGSLESNVE). Over residues 951–961 (FQPPQPPVLCS) the composition is skewed to pro residues.

Belongs to the BRAG family. As to quaternary structure, interacts with ARF1 and ARF6. Interacts with GRIA2; the interaction is required for ARF6 activation. Expressed in hippocampus.

The protein localises to the cytoplasm. The protein resides in the nucleus. It localises to the postsynaptic density. Its subcellular location is the cytoplasmic vesicle. It is found in the secretory vesicle. The protein localises to the synaptic vesicle. In terms of biological role, guanine nucleotide exchange factor for ARF1 and ARF6. Guanine nucleotide exchange factor activity is enhanced by lipid binding. Accelerates GTP binding by ARFs of all three classes. Guanine nucleotide exchange protein for ARF6, mediating internalization of beta-1 integrin. Involved in neuronal development. In neurons, plays a role in the control of vesicle formation by endocytoc cargo. Upon long term depression, interacts with GRIA2 and mediates the activation of ARF6 to internalize synaptic AMPAR receptors. This Mus musculus (Mouse) protein is IQ motif and SEC7 domain-containing protein 1 (Iqsec1).